The sequence spans 898 residues: Vacuolar protein sorting-associated protein 41 homolog (898 aa).

The segment covering 1 to 10 (MDESNDKENE) has biased composition (basic and acidic residues). The disordered stretch occupies residues 1 to 35 (MDESNDKENEFGDSFLEDSGDITRTTEDEDEAPLE). Residues 614 to 756 (LRLLLDNADS…VADFPTHFSQ (143 aa)) form a CHCR repeat. An RING-type; atypical zinc finger spans residues 835–890 (CSLCSQVIMNTGQDMIPRKFNDIKVFKCGHIFHLTCSASEIDRRQMIEDGICIACS).

This sequence belongs to the VPS41 family. In terms of assembly, probable component of the homotypic fusion and vacuole protein sorting (HOPS) complex consisting of the core class C Vps proteins vps-11, vps-16, vps-18, and which further associates with vps-33.1, vps-39 and vps-41.

The protein localises to the endosome membrane. It localises to the late endosome. The protein resides in the lysosome. Its subcellular location is the golgi apparatus. It is found in the trans-Golgi network. The protein localises to the early endosome. It localises to the cytoplasmic vesicle. The protein resides in the clathrin-coated vesicle. Its function is as follows. Plays a role in vesicle-mediated protein trafficking to lysosomal compartments including the endocytic membrane transport pathways. Believed to act in part as a core component of the putative HOPS endosomal tethering complex which is proposed to be involved in the rab-5-to-rab-7 endosome conversion probably implicating sand-1, and via binding SNAREs and SNARE complexes to mediate tethering and docking events during SNARE-mediated membrane fusion. The HOPS complex is proposed to be recruited to rab-7 on the late endosomal membrane and to regulate late endocytic, phagocytic and autophagic traffic towards lysosomes. Within the HOPS complex, contributes to the normal development of gut granules in the adult intestine. May mediate the tethering of autophagosomes with lysosomes. Has a role in the negative regulation of apoptosis. Required for uptake of exogenous dsRNA which is used in experimental RNA silencing. The sequence is that of Vacuolar protein sorting-associated protein 41 homolog from Caenorhabditis briggsae.